A 286-amino-acid polypeptide reads, in one-letter code: Transcription factor bHLH11 (286 aa).

Residues 1–34 (MDQPMKPKTCSESDFADDSSASSSSSSGQNLRGA) are disordered. The span at 18-27 (DSSASSSSSS) shows a compositional bias: low complexity. One can recognise a bHLH domain in the interval 44 to 94 (AVCSQKAEREKLRRDKLKEQFLELGNALDPNRPKSDKASVLTDTIQMLKDV). 2 disordered regions span residues 182-202 (EQQA…MKQD) and 244-286 (QQDV…MLKP). Composition is skewed to low complexity over residues 183-198 (QQAS…ADAS) and 255-269 (SLTT…YSLS). A compositionally biased stretch (polar residues) spans 270–279 (QAVQDSSPGT).

In terms of assembly, homodimer. Expressed consitutively in roots, leaves, stems, and flowers.

It is found in the nucleus. This chain is Transcription factor bHLH11 (BHLH11), found in Arabidopsis thaliana (Mouse-ear cress).